Reading from the N-terminus, the 158-residue chain is 2-C-methyl-D-erythritol 2,4-cyclodiphosphate synthase (158 aa).

Positions 8 and 10 each coordinate a divalent metal cation. 4-CDP-2-C-methyl-D-erythritol 2-phosphate contacts are provided by residues 8-10 (DAH) and 34-35 (HS). H42 serves as a coordination point for a divalent metal cation. Residues 56–58 (DIG), 132–135 (TTTE), and R142 each bind 4-CDP-2-C-methyl-D-erythritol 2-phosphate.

The protein belongs to the IspF family. In terms of assembly, homotrimer. The cofactor is a divalent metal cation.

The enzyme catalyses 4-CDP-2-C-methyl-D-erythritol 2-phosphate = 2-C-methyl-D-erythritol 2,4-cyclic diphosphate + CMP. It participates in isoprenoid biosynthesis; isopentenyl diphosphate biosynthesis via DXP pathway; isopentenyl diphosphate from 1-deoxy-D-xylulose 5-phosphate: step 4/6. Functionally, involved in the biosynthesis of isopentenyl diphosphate (IPP) and dimethylallyl diphosphate (DMAPP), two major building blocks of isoprenoid compounds. Catalyzes the conversion of 4-diphosphocytidyl-2-C-methyl-D-erythritol 2-phosphate (CDP-ME2P) to 2-C-methyl-D-erythritol 2,4-cyclodiphosphate (ME-CPP) with a corresponding release of cytidine 5-monophosphate (CMP). In Nitrosococcus oceani (strain ATCC 19707 / BCRC 17464 / JCM 30415 / NCIMB 11848 / C-107), this protein is 2-C-methyl-D-erythritol 2,4-cyclodiphosphate synthase.